The following is a 366-amino-acid chain: Ribosomal RNA large subunit methyltransferase M (366 aa).

Residues Ser-188, 221–224 (CPGG), Asp-240, Asp-260, and Asp-277 contribute to the S-adenosyl-L-methionine site. The Proton acceptor role is filled by Lys-306.

Belongs to the class I-like SAM-binding methyltransferase superfamily. RNA methyltransferase RlmE family. RlmM subfamily. In terms of assembly, monomer.

It is found in the cytoplasm. The catalysed reaction is cytidine(2498) in 23S rRNA + S-adenosyl-L-methionine = 2'-O-methylcytidine(2498) in 23S rRNA + S-adenosyl-L-homocysteine + H(+). In terms of biological role, catalyzes the 2'-O-methylation at nucleotide C2498 in 23S rRNA. In Dickeya chrysanthemi (strain Ech1591) (Dickeya zeae (strain Ech1591)), this protein is Ribosomal RNA large subunit methyltransferase M.